Here is a 386-residue protein sequence, read N- to C-terminus: MTLPVWVAAAARAATEALLGRPFSAFQLLELPDRDEPFAVSVTSAAVLAGGEQALSISHCDPGPGLDLTRGLEIWVCVQWQELVVGVDDELNVHSEAWLNLVAGKGVGTLGSGGEACVSRFARELLSRNLYPLVPSGRGLRLEVVLPRGRDLAARTSNAAFGVVDGLALIGTQADVQVSASPDQLQQTIEQLRRQSAASDFCGAMTLVIGENGLDLARQLGLAVQPLLKIGNWLGPVIVAAAEAGVEQLLLLGYHGKLVKLAGGIFHTHHHLADGRLEVLAAMAVREGLPLDLIRQLGQADSMEAALKMLEAQDPELVRKLWYRLAATVEHRSAAYLARYGSWSIAIGAALFDRQRRLRWAGPQGSQQLAVLGVTPEDSPISLSLP.

This sequence belongs to the CbiD family.

The catalysed reaction is Co-precorrin-5B + S-adenosyl-L-methionine = Co-precorrin-6A + S-adenosyl-L-homocysteine. Its pathway is cofactor biosynthesis; adenosylcobalamin biosynthesis; cob(II)yrinate a,c-diamide from sirohydrochlorin (anaerobic route): step 6/10. Catalyzes the methylation of C-1 in cobalt-precorrin-5B to form cobalt-precorrin-6A. This Prochlorococcus marinus (strain MIT 9303) protein is Cobalt-precorrin-5B C(1)-methyltransferase.